The following is a 177-amino-acid chain: Adenine phosphoribosyltransferase (177 aa).

The protein belongs to the purine/pyrimidine phosphoribosyltransferase family. As to quaternary structure, homodimer.

The protein localises to the cytoplasm. The catalysed reaction is AMP + diphosphate = 5-phospho-alpha-D-ribose 1-diphosphate + adenine. It participates in purine metabolism; AMP biosynthesis via salvage pathway; AMP from adenine: step 1/1. Functionally, catalyzes a salvage reaction resulting in the formation of AMP, that is energically less costly than de novo synthesis. The polypeptide is Adenine phosphoribosyltransferase (Leptospira interrogans serogroup Icterohaemorrhagiae serovar copenhageni (strain Fiocruz L1-130)).